A 270-amino-acid polypeptide reads, in one-letter code: Putative phosphoenolpyruvate synthase regulatory protein (270 aa).

150–157 lines the ADP pocket; that stretch reads GVSRCGKT.

Belongs to the pyruvate, phosphate/water dikinase regulatory protein family. PSRP subfamily.

The enzyme catalyses [pyruvate, water dikinase] + ADP = [pyruvate, water dikinase]-phosphate + AMP + H(+). It catalyses the reaction [pyruvate, water dikinase]-phosphate + phosphate + H(+) = [pyruvate, water dikinase] + diphosphate. Bifunctional serine/threonine kinase and phosphorylase involved in the regulation of the phosphoenolpyruvate synthase (PEPS) by catalyzing its phosphorylation/dephosphorylation. This is Putative phosphoenolpyruvate synthase regulatory protein from Shewanella sediminis (strain HAW-EB3).